The primary structure comprises 461 residues: Alkaline phosphatase 4 (461 aa).

Residues 1 to 41 form the signal peptide; that stretch reads MKKMSLFQNMKSKLLPIAAVSVLTAGIFAGAELQQTEKASA. D58 contributes to the Mg(2+) binding site. Position 58 (D58) interacts with Zn(2+). S108 (phosphoserine intermediate) is an active-site residue. The Mg(2+) site is built by T161 and E282. Zn(2+) contacts are provided by D287, H291, D329, H330, and H423.

The protein belongs to the alkaline phosphatase family. In terms of assembly, monomer. The cofactor is Mg(2+). Zn(2+) is required as a cofactor.

It carries out the reaction a phosphate monoester + H2O = an alcohol + phosphate. The polypeptide is Alkaline phosphatase 4 (phoA) (Bacillus subtilis (strain 168)).